The sequence spans 311 residues: Large ribosomal subunit protein uL22 (311 aa).

It belongs to the universal ribosomal protein uL22 family. Part of the 50S ribosomal subunit.

This protein binds specifically to 23S rRNA; its binding is stimulated by other ribosomal proteins, e.g. L4, L17, and L20. It is important during the early stages of 50S assembly. It makes multiple contacts with different domains of the 23S rRNA in the assembled 50S subunit and ribosome. Functionally, the globular domain of the protein is located near the polypeptide exit tunnel on the outside of the subunit, while an extended beta-hairpin is found that lines the wall of the exit tunnel in the center of the 70S ribosome. The sequence is that of Large ribosomal subunit protein uL22 (rplV) from Ureaplasma parvum serovar 3 (strain ATCC 27815 / 27 / NCTC 11736).